Here is a 1840-residue protein sequence, read N- to C-terminus: Neurexin 1 (1840 aa).

The interval 1-50 (MKAPHSATYQDNYADAAMTARTRPSMDMDQQRNRNQAELRLLPAQRTSTS) is disordered. Over 1-1696 (MKAPHSATYQ…NSIEEERTAM (1696 aa)) the chain is Extracellular. A compositionally biased stretch (basic and acidic residues) spans 24-37 (PSMDMDQQRNRNQA). Residues 104 to 289 (GFQLDGSQNS…RDIKCGDVPC (186 aa)) enclose the Laminin G-like 1 domain. Positions 309-347 (TTDACERNDPCQHGGICISTDSGPICECRNLEYDGQYCE) constitute an EGF-like 1 domain. Disulfide bonds link Cys313–Cys325, Cys319–Cys334, Cys336–Cys346, Cys511–Cys547, Cys710–Cys739, Cys746–Cys757, Cys751–Cys766, and Cys768–Cys778. Laminin G-like domains are found at residues 352 to 547 (PSEA…EYQC) and 554 to 739 (DPVT…KPSC). One can recognise an EGF-like 2 domain in the interval 742–779 (QANVCNGNPCLNGGTCLEGWNRPICDCSATLYGGPTCG). 2 consecutive Laminin G-like domains span residues 784–964 (TLAF…LPSA) and 982–1158 (HAAT…VSGC). Intrachain disulfides connect Cys1130–Cys1158, Cys1164–Cys1175, Cys1169–Cys1184, and Cys1186–Cys1196. One can recognise an EGF-like 3 domain in the interval 1160 to 1197 (GPTKCSQNACANRGNCVQQWNAYACECDMTSYTGPTCY). One can recognise a Laminin G-like 6 domain in the interval 1201–1416 (IAYEFGNNKG…LIFSGAGSGC (216 aa)). A disordered region spans residues 1411–1651 (GAGSGCRGDD…DEHHPLPPLP (241 aa)). Residues 1447 to 1472 (QTTTSQQGNSLSTGGSSSGGVITNGT) are compositionally biased toward low complexity. Positions 1491–1527 (TTEQFTSTSTARGSESNNEMVTITTTGRSDVTTEQHQ) are enriched in polar residues. Residues 1528–1600 (GSSSSSSSGS…TTTTTTTTQA (73 aa)) are compositionally biased toward low complexity. Residues 1632 to 1646 (RNDHDRMQLPDEHHP) show a composition bias toward basic and acidic residues. Residues 1697 to 1717 (IIGIVAGILIAVVLVILLVLW) traverse the membrane as a helical segment. Residues 1718 to 1840 (LKSNGDRGYK…DSKDVKEWYV (123 aa)) are Cytoplasmic-facing. Positions 1737 to 1840 (GSHNPNAALL…DSKDVKEWYV (104 aa)) are disordered. Polar residues predominate over residues 1747–1757 (GNTSTNGSYHQ). The span at 1774–1787 (QQQHHAQQQMHNGH) shows a compositional bias: low complexity. Over residues 1788–1813 (NGNGNGGGGGGGGMMSSGSGSLGYGS) the composition is skewed to gly residues. Residues Asp1831 and Asp1834 each contribute to the Zn(2+) site. The span at 1831–1840 (DSKDVKEWYV) shows a compositional bias: basic and acidic residues. Residues 1837–1840 (EWYV) carry the PDZ domain binding motif.

This sequence belongs to the neurexin family. In terms of assembly, interacts (via C-terminal PDZ binding motif) with CASK (via PDZ domain). Interacts (via cytoplasmic domain) with apolpp/ApoLI; the interaction supports apolpp/ApoLI protein stability. Interact (via cytoplasmic domain) with Spn/Spinophilin. Interacts with RhoGAP100F/Syd-1 (via PDZ domain); RhoGAP100F/Syd-1 may recruit Nrx-1 to the presynaptic active zone. As to expression, expressed in brain, with expression in medulla, lamina, lobula, lobula plate, mushroom body and antennal lobe, and in retina (at protein level). Expressed in rabdomere of photoreceptor cells (at protein level).

It localises to the synaptic cell membrane. The protein resides in the presynaptic cell membrane. Its subcellular location is the postsynaptic cell membrane. Neuronal cell adhesion protein involved in synapse formation, development of synaptic active zones, synaptic regulation and visual function. Plays a role in cell adhesion between the pre- and the postsynaptic cell. Required for proper proliferation of synaptic boutons during larval development, a process necessary for coordinated matching of pre-and postsynaptic compartments. Promotes presynaptic active zone formation and neurotransmitter release. Spn/Spinophilin fine-tunes nrx-1/nlg1 signaling at the pre-synapse to control active zone number and functionality and thereby optimizing action potential-induced exocytosis. Required for synapse formation in central nervous system. By regulating synapse formation, may play a role in larval associative learning. Together with RhoGAP100F/syd-1, controls synapse formation at the neuromuscular junction. Essential for synaptic vesicle cycling, which plays critical roles in neurotransmission at neuromuscular junctions (NMJ). Regulated and restricts formation of glutamate receptor clusters. Mediates retinoid transport and subsequent rhodopsin maturation and may regulate lipoprotein function; thereby playing a role in vision. Regulates sleep, circadian rhythm and synaptic plasticity. Together with CASK, required for locomotion. The chain is Neurexin 1 from Drosophila melanogaster (Fruit fly).